The chain runs to 626 residues: DNA mismatch repair protein MutL (626 aa).

Disordered stretches follow at residues 385-413 and 418-437; these read SGASVPPPSIDPVESSFGSGSGEPYPSMV and LTPSADQPSAADEQNPVAPD.

It belongs to the DNA mismatch repair MutL/HexB family.

This protein is involved in the repair of mismatches in DNA. It is required for dam-dependent methyl-directed DNA mismatch repair. May act as a 'molecular matchmaker', a protein that promotes the formation of a stable complex between two or more DNA-binding proteins in an ATP-dependent manner without itself being part of a final effector complex. This Chlorobaculum parvum (strain DSM 263 / NCIMB 8327) (Chlorobium vibrioforme subsp. thiosulfatophilum) protein is DNA mismatch repair protein MutL.